The chain runs to 628 residues: tRNA 5-methylaminomethyl-2-thiouridine biosynthesis bifunctional protein MnmC (628 aa).

Residues 1–237 (MSSYSPLVPP…KWHMTVGVRE (237 aa)) are tRNA (mnm(5)s(2)U34)-methyltransferase. Residues 265-628 (VGGGLAGAGI…ADLLAAVAPR (364 aa)) are FAD-dependent cmnm(5)s(2)U34 oxidoreductase.

The protein in the N-terminal section; belongs to the methyltransferase superfamily. tRNA (mnm(5)s(2)U34)-methyltransferase family. In the C-terminal section; belongs to the DAO family. The cofactor is FAD.

It is found in the cytoplasm. The catalysed reaction is 5-aminomethyl-2-thiouridine(34) in tRNA + S-adenosyl-L-methionine = 5-methylaminomethyl-2-thiouridine(34) in tRNA + S-adenosyl-L-homocysteine + H(+). Its function is as follows. Catalyzes the last two steps in the biosynthesis of 5-methylaminomethyl-2-thiouridine (mnm(5)s(2)U) at the wobble position (U34) in tRNA. Catalyzes the FAD-dependent demodification of cmnm(5)s(2)U34 to nm(5)s(2)U34, followed by the transfer of a methyl group from S-adenosyl-L-methionine to nm(5)s(2)U34, to form mnm(5)s(2)U34. This Bordetella petrii (strain ATCC BAA-461 / DSM 12804 / CCUG 43448) protein is tRNA 5-methylaminomethyl-2-thiouridine biosynthesis bifunctional protein MnmC.